A 273-amino-acid chain; its full sequence is Ribosomal RNA small subunit methyltransferase A (273 aa).

S-adenosyl-L-methionine-binding residues include Asn18, Leu20, Gly45, Glu66, Asp91, and Asn113.

This sequence belongs to the class I-like SAM-binding methyltransferase superfamily. rRNA adenine N(6)-methyltransferase family. RsmA subfamily.

The protein localises to the cytoplasm. It catalyses the reaction adenosine(1518)/adenosine(1519) in 16S rRNA + 4 S-adenosyl-L-methionine = N(6)-dimethyladenosine(1518)/N(6)-dimethyladenosine(1519) in 16S rRNA + 4 S-adenosyl-L-homocysteine + 4 H(+). Its function is as follows. Specifically dimethylates two adjacent adenosines (A1518 and A1519) in the loop of a conserved hairpin near the 3'-end of 16S rRNA in the 30S particle. May play a critical role in biogenesis of 30S subunits. This is Ribosomal RNA small subunit methyltransferase A from Shigella dysenteriae serotype 1 (strain Sd197).